We begin with the raw amino-acid sequence, 786 residues long: Endonuclease MutS2 (786 aa).

Glycine 335–threonine 342 is a binding site for ATP. The tract at residues serine 529–lysine 549 is disordered. In terms of domain architecture, Smr spans leucine 711–lysine 786.

It belongs to the DNA mismatch repair MutS family. MutS2 subfamily. In terms of assembly, homodimer. Binds to stalled ribosomes, contacting rRNA.

Its function is as follows. Endonuclease that is involved in the suppression of homologous recombination and thus may have a key role in the control of bacterial genetic diversity. Functionally, acts as a ribosome collision sensor, splitting the ribosome into its 2 subunits. Detects stalled/collided 70S ribosomes which it binds and splits by an ATP-hydrolysis driven conformational change. Acts upstream of the ribosome quality control system (RQC), a ribosome-associated complex that mediates the extraction of incompletely synthesized nascent chains from stalled ribosomes and their subsequent degradation. Probably generates substrates for RQC. This is Endonuclease MutS2 from Bacillus mycoides (strain KBAB4) (Bacillus weihenstephanensis).